We begin with the raw amino-acid sequence, 63 residues long: DNA gyrase inhibitor YacG (63 aa).

Zn(2+) contacts are provided by cysteine 9, cysteine 12, cysteine 28, and cysteine 32.

Belongs to the DNA gyrase inhibitor YacG family. Interacts with GyrB. Requires Zn(2+) as cofactor.

Functionally, inhibits all the catalytic activities of DNA gyrase by preventing its interaction with DNA. Acts by binding directly to the C-terminal domain of GyrB, which probably disrupts DNA binding by the gyrase. This is DNA gyrase inhibitor YacG from Salmonella choleraesuis (strain SC-B67).